A 295-amino-acid chain; its full sequence is UDP-N-acetylenolpyruvoylglucosamine reductase (295 aa).

In terms of domain architecture, FAD-binding PCMH-type spans 26-189 (VGGRADVLFK…VEAEFKGVNS (164 aa)). The active site involves R169. C218 serves as the catalytic Proton donor. The active site involves E288.

This sequence belongs to the MurB family. FAD serves as cofactor.

It is found in the cytoplasm. The enzyme catalyses UDP-N-acetyl-alpha-D-muramate + NADP(+) = UDP-N-acetyl-3-O-(1-carboxyvinyl)-alpha-D-glucosamine + NADPH + H(+). Its pathway is cell wall biogenesis; peptidoglycan biosynthesis. Its function is as follows. Cell wall formation. In Wolbachia pipientis wMel, this protein is UDP-N-acetylenolpyruvoylglucosamine reductase.